The primary structure comprises 167 residues: SsrA-binding protein (167 aa).

The protein belongs to the SmpB family.

Its subcellular location is the cytoplasm. Required for rescue of stalled ribosomes mediated by trans-translation. Binds to transfer-messenger RNA (tmRNA), required for stable association of tmRNA with ribosomes. tmRNA and SmpB together mimic tRNA shape, replacing the anticodon stem-loop with SmpB. tmRNA is encoded by the ssrA gene; the 2 termini fold to resemble tRNA(Ala) and it encodes a 'tag peptide', a short internal open reading frame. During trans-translation Ala-aminoacylated tmRNA acts like a tRNA, entering the A-site of stalled ribosomes, displacing the stalled mRNA. The ribosome then switches to translate the ORF on the tmRNA; the nascent peptide is terminated with the 'tag peptide' encoded by the tmRNA and targeted for degradation. The ribosome is freed to recommence translation, which seems to be the essential function of trans-translation. This is SsrA-binding protein from Stenotrophomonas maltophilia (strain K279a).